The sequence spans 236 residues: CO-responsive transcriptional regulator RcoM (236 aa).

Positions M1–L64 constitute a PAS domain. H52 contributes to the heme binding site. An HTH LytTR-type domain is found at V131 to I236.

It depends on heme as a cofactor.

Functionally, activates the expression of the CowN protein in response to carbon monoxide (CO). Is required to sustain N(2)-dependent growth in the presence of low levels of carbon monoxide (CO). In Rhodospirillum rubrum (strain ATCC 11170 / ATH 1.1.1 / DSM 467 / LMG 4362 / NCIMB 8255 / S1), this protein is CO-responsive transcriptional regulator RcoM (rcoM).